The primary structure comprises 540 residues: Zona pellucida sperm-binding protein 4 (540 aa).

The signal sequence occupies residues 1–24; the sequence is MAPGSTMWLLGYIFLCFPVSFALI. Residues 25–515 lie on the Extracellular side of the membrane; that stretch reads KQPKPETPTD…SGVPVHPGAL (491 aa). Asn76 and Asn97 each carry an N-linked (GlcNAc...) asparagine glycan. The P-type domain maps to 145 to 187; sequence GLCDSVPVQDRLPCATAPISQEDCEELGCCHSSEEVNACYYGN. Positions 192–470 constitute a ZP domain; sequence HCTQEGHFSI…VTCPIDSRRR (279 aa). Residues Asn206 and Asn223 are each glycosylated (N-linked (GlcNAc...) asparagine). O-linked (GalNAc...) serine glycosylation occurs at Ser296. O-linked (GalNAc...) threonine glycosylation is present at Thr306. Cys371 and Cys446 are oxidised to a cystine. A propeptide spans 467-540 (removed in mature form); the sequence is SRRRNSDINF…VSYVAIRTRR (74 aa). N-linked (GlcNAc...) asparagine glycosylation is found at Asn478 and Asn482. A helical transmembrane segment spans residues 516-536; it reads WVAGLSGIFIIGALLVSYVAI. Topologically, residues 537–540 are cytoplasmic; it reads RTRR.

This sequence belongs to the ZP domain family. ZPB subfamily. Proteolytically cleaved before the transmembrane segment to yield the secreted ectodomain incorporated in the zona pellucida. In terms of tissue distribution, expressed in oocytes (at protein level).

It localises to the zona pellucida. The protein localises to the cell membrane. In terms of biological role, component of the zona pellucida, an extracellular matrix surrounding oocytes which mediates sperm binding, induction of the acrosome reaction and prevents post-fertilization polyspermy. The zona pellucida is composed of 3 to 4 glycoproteins, ZP1, ZP2, ZP3, and ZP4. ZP4 may act as a sperm receptor. The sequence is that of Zona pellucida sperm-binding protein 4 (ZP4) from Oryctolagus cuniculus (Rabbit).